We begin with the raw amino-acid sequence, 376 residues long: Succinyl-diaminopimelate desuccinylase (376 aa).

His-66 lines the Zn(2+) pocket. Asp-68 is a catalytic residue. Position 99 (Asp-99) interacts with Zn(2+). Catalysis depends on Glu-133, which acts as the Proton acceptor. The Zn(2+) site is built by Glu-134, Glu-162, and His-348.

Belongs to the peptidase M20A family. DapE subfamily. In terms of assembly, homodimer. Zn(2+) is required as a cofactor. The cofactor is Co(2+).

The enzyme catalyses N-succinyl-(2S,6S)-2,6-diaminopimelate + H2O = (2S,6S)-2,6-diaminopimelate + succinate. Its pathway is amino-acid biosynthesis; L-lysine biosynthesis via DAP pathway; LL-2,6-diaminopimelate from (S)-tetrahydrodipicolinate (succinylase route): step 3/3. In terms of biological role, catalyzes the hydrolysis of N-succinyl-L,L-diaminopimelic acid (SDAP), forming succinate and LL-2,6-diaminopimelate (DAP), an intermediate involved in the bacterial biosynthesis of lysine and meso-diaminopimelic acid, an essential component of bacterial cell walls. The protein is Succinyl-diaminopimelate desuccinylase of Xanthomonas oryzae pv. oryzae (strain PXO99A).